Reading from the N-terminus, the 276-residue chain is ARL14 effector protein (276 aa).

The tract at residues 159-183 (QTEFAPESGKREKRKLTKNASASSD) is disordered. A Glycyl lysine isopeptide (Lys-Gly) (interchain with G-Cter in SUMO2) cross-link involves residue Lys-176. Phosphoserine occurs at positions 182 and 266.

Interacts with ARL14 and MYO1E.

The protein localises to the cytoplasm. Through its interaction with ARL14 and MYO1E, may connect MHC class II-containing cytoplasmic vesicles to the actin network and hence controls the movement of these vesicles along the actin cytoskeleton in dendritic cells. The sequence is that of ARL14 effector protein (Arl14ep) from Rattus norvegicus (Rat).